The following is a 565-amino-acid chain: Dihydroxy-acid dehydratase (565 aa).

Asp-83 is a Mg(2+) binding site. [2Fe-2S] cluster is bound at residue Cys-124. Residues Asp-125 and Lys-126 each coordinate Mg(2+). N6-carboxylysine is present on Lys-126. [2Fe-2S] cluster is bound at residue Cys-197. Glu-451 contributes to the Mg(2+) binding site. Ser-477 functions as the Proton acceptor in the catalytic mechanism.

It belongs to the IlvD/Edd family. As to quaternary structure, homodimer. The cofactor is [2Fe-2S] cluster. It depends on Mg(2+) as a cofactor.

The catalysed reaction is (2R)-2,3-dihydroxy-3-methylbutanoate = 3-methyl-2-oxobutanoate + H2O. The enzyme catalyses (2R,3R)-2,3-dihydroxy-3-methylpentanoate = (S)-3-methyl-2-oxopentanoate + H2O. The protein operates within amino-acid biosynthesis; L-isoleucine biosynthesis; L-isoleucine from 2-oxobutanoate: step 3/4. Its pathway is amino-acid biosynthesis; L-valine biosynthesis; L-valine from pyruvate: step 3/4. Functionally, functions in the biosynthesis of branched-chain amino acids. Catalyzes the dehydration of (2R,3R)-2,3-dihydroxy-3-methylpentanoate (2,3-dihydroxy-3-methylvalerate) into 2-oxo-3-methylpentanoate (2-oxo-3-methylvalerate) and of (2R)-2,3-dihydroxy-3-methylbutanoate (2,3-dihydroxyisovalerate) into 2-oxo-3-methylbutanoate (2-oxoisovalerate), the penultimate precursor to L-isoleucine and L-valine, respectively. The protein is Dihydroxy-acid dehydratase of Symbiobacterium thermophilum (strain DSM 24528 / JCM 14929 / IAM 14863 / T).